The primary structure comprises 207 residues: N-(5'-phosphoribosyl)anthranilate isomerase (207 aa).

Belongs to the TrpF family.

The catalysed reaction is N-(5-phospho-beta-D-ribosyl)anthranilate = 1-(2-carboxyphenylamino)-1-deoxy-D-ribulose 5-phosphate. It functions in the pathway amino-acid biosynthesis; L-tryptophan biosynthesis; L-tryptophan from chorismate: step 3/5. The chain is N-(5'-phosphoribosyl)anthranilate isomerase from Legionella pneumophila subsp. pneumophila (strain Philadelphia 1 / ATCC 33152 / DSM 7513).